The following is a 333-amino-acid chain: Ferrochelatase (333 aa).

Residues H202 and E284 each coordinate Fe cation.

It belongs to the ferrochelatase family.

The protein localises to the cytoplasm. The enzyme catalyses heme b + 2 H(+) = protoporphyrin IX + Fe(2+). Its pathway is porphyrin-containing compound metabolism; protoheme biosynthesis; protoheme from protoporphyrin-IX: step 1/1. Functionally, catalyzes the ferrous insertion into protoporphyrin IX. The sequence is that of Ferrochelatase from Francisella tularensis subsp. tularensis (strain FSC 198).